The chain runs to 512 residues: MKKIQFFDTTLRDGEQTPGVNFDVKEKIQIALQLEKLGIDVIEAGFPISSPGDFECVKAIAKAIKHCSVTGLARCVEGDIDRAEEALKDAVSPQIHIFLATSDVHMEYKLKMSRAEVLASIKHHISYARQKFDVVQFSPEDATRSDRAFLIEAVQTAIDAGATVINIPDTVGYTNPTEFGQLFQDLRREIKQFDDIIFASHCHDDLGMATANALAAIENGARRVEGTINGIGERAGNTALEEVAVALHIRKDFYQAETNIVLNQFKNSSDLISRLSGMPVPRNKAVIGGNAYAHESGIHQDGVLKNPDTYEIITPALVGVDKNSLPLGKLSGKHAFNTRMEEMGYTLTEQEQKDAFKRFKQLADAKKEVTEEDLHALILGQSSESADDFELKHLQVQYVTGGVQGAIVRIEERDGALVEDAATGSGSIEAIYNTINRLMKQDIELTDYRIQAITAGQDAQAEVHVVIKNDKGAVFHGIGIDFDVLTASAKAYLQASGKSKTASKQADFEEVK.

The region spanning isoleucine 4 to lysine 266 is the Pyruvate carboxyltransferase domain. 4 residues coordinate Mn(2+): aspartate 13, histidine 201, histidine 203, and asparagine 237. The segment at glutamate 390 to lysine 512 is regulatory domain.

Belongs to the alpha-IPM synthase/homocitrate synthase family. LeuA type 1 subfamily. In terms of assembly, homodimer. Requires Mn(2+) as cofactor.

The protein localises to the cytoplasm. It carries out the reaction 3-methyl-2-oxobutanoate + acetyl-CoA + H2O = (2S)-2-isopropylmalate + CoA + H(+). It functions in the pathway amino-acid biosynthesis; L-leucine biosynthesis; L-leucine from 3-methyl-2-oxobutanoate: step 1/4. Its function is as follows. Catalyzes the condensation of the acetyl group of acetyl-CoA with 3-methyl-2-oxobutanoate (2-ketoisovalerate) to form 3-carboxy-3-hydroxy-4-methylpentanoate (2-isopropylmalate). This is 2-isopropylmalate synthase from Listeria monocytogenes serotype 4b (strain CLIP80459).